The chain runs to 403 residues: Phosphoglycerate kinase (403 aa).

Substrate contacts are provided by residues 24–26, arginine 39, 62–65, arginine 121, and arginine 161; these read DLN and HLGR. ATP contacts are provided by residues lysine 211, glycine 299, glutamate 330, and 359 to 362; that span reads GGDS.

This sequence belongs to the phosphoglycerate kinase family. As to quaternary structure, monomer.

The protein resides in the cytoplasm. It catalyses the reaction (2R)-3-phosphoglycerate + ATP = (2R)-3-phospho-glyceroyl phosphate + ADP. It functions in the pathway carbohydrate degradation; glycolysis; pyruvate from D-glyceraldehyde 3-phosphate: step 2/5. The sequence is that of Phosphoglycerate kinase from Rhodococcus opacus (strain B4).